Here is a 302-residue protein sequence, read N- to C-terminus: uncharacterized protein (302 aa).

Belongs to the HAD-like hydrolase superfamily.

It localises to the cytoplasm. The protein localises to the nucleus. This is an uncharacterized protein from Schizosaccharomyces pombe (strain 972 / ATCC 24843) (Fission yeast).